Reading from the N-terminus, the 226-residue chain is Uracil-DNA glycosylase (226 aa).

D65 functions as the Proton acceptor in the catalytic mechanism.

This sequence belongs to the uracil-DNA glycosylase (UDG) superfamily. UNG family.

The protein localises to the cytoplasm. The catalysed reaction is Hydrolyzes single-stranded DNA or mismatched double-stranded DNA and polynucleotides, releasing free uracil.. Its function is as follows. Excises uracil residues from the DNA which can arise as a result of misincorporation of dUMP residues by DNA polymerase or due to deamination of cytosine. The sequence is that of Uracil-DNA glycosylase from Enterococcus faecalis (strain ATCC 700802 / V583).